We begin with the raw amino-acid sequence, 228 residues long: Uracil-DNA glycosylase (228 aa).

Asp-64 acts as the Proton acceptor in catalysis.

This sequence belongs to the uracil-DNA glycosylase (UDG) superfamily. UNG family. Monomer.

The protein localises to the cytoplasm. The catalysed reaction is Hydrolyzes single-stranded DNA or mismatched double-stranded DNA and polynucleotides, releasing free uracil.. Functionally, excises uracil residues from the DNA which can arise as a result of misincorporation of dUMP residues by DNA polymerase or due to deamination of cytosine. The sequence is that of Uracil-DNA glycosylase from Escherichia coli O6:H1 (strain CFT073 / ATCC 700928 / UPEC).